A 240-amino-acid polypeptide reads, in one-letter code: MSQILQHDAALVLFSGGQDSATCLAWTLSRFARVETLGFDYGQRHAVELDCRDRLIDGLKQIHPDWANKLGDAHTLSIPTLATISDTALTRDVAIAMGADGLPNTFVPGRNLLFLTFAAALAYRRGIGGLVGGMCETDYSGYPDCRDATLKALTTALNLGMATDFELHTPLMWRDKAATWALAQDLGGDALVDLIREHSHTCYLGERGARHDWGYGCGECPACQLRAKGWREYREAGTAT.

Position 14–24 (14–24 (FSGGQDSATCL)) interacts with ATP. Zn(2+)-binding residues include cysteine 202, cysteine 217, cysteine 220, and cysteine 223.

It belongs to the QueC family. It depends on Zn(2+) as a cofactor.

The enzyme catalyses 7-carboxy-7-deazaguanine + NH4(+) + ATP = 7-cyano-7-deazaguanine + ADP + phosphate + H2O + H(+). It functions in the pathway purine metabolism; 7-cyano-7-deazaguanine biosynthesis. Functionally, catalyzes the ATP-dependent conversion of 7-carboxy-7-deazaguanine (CDG) to 7-cyano-7-deazaguanine (preQ(0)). This chain is 7-cyano-7-deazaguanine synthase, found in Rhodopseudomonas palustris (strain BisB18).